We begin with the raw amino-acid sequence, 101 residues long: Phosphoribosyl-AMP cyclohydrolase (101 aa).

Mg(2+) is bound at residue D71. C72 lines the Zn(2+) pocket. The Mg(2+) site is built by D73 and D75. Zn(2+) contacts are provided by C88 and C95.

This sequence belongs to the PRA-CH family. As to quaternary structure, homodimer. Mg(2+) is required as a cofactor. Zn(2+) serves as cofactor.

It is found in the cytoplasm. The catalysed reaction is 1-(5-phospho-beta-D-ribosyl)-5'-AMP + H2O = 1-(5-phospho-beta-D-ribosyl)-5-[(5-phospho-beta-D-ribosylamino)methylideneamino]imidazole-4-carboxamide. Its pathway is amino-acid biosynthesis; L-histidine biosynthesis; L-histidine from 5-phospho-alpha-D-ribose 1-diphosphate: step 3/9. Catalyzes the hydrolysis of the adenine ring of phosphoribosyl-AMP. The sequence is that of Phosphoribosyl-AMP cyclohydrolase from Bacillus cereus (strain G9842).